A 309-amino-acid chain; its full sequence is Pseudouridine-5'-phosphate glycosidase 2 (309 aa).

Glu-26 acts as the Proton donor in catalysis. Residues Lys-87 and Val-107 each contribute to the substrate site. Position 139 (Asp-139) interacts with Mn(2+). 141–143 contacts substrate; that stretch reads SAD. Lys-160 acts as the Nucleophile in catalysis.

The protein belongs to the pseudouridine-5'-phosphate glycosidase family. In terms of assembly, homotrimer. Mn(2+) serves as cofactor.

It carries out the reaction D-ribose 5-phosphate + uracil = psi-UMP + H2O. Its function is as follows. Catalyzes the reversible cleavage of pseudouridine 5'-phosphate (PsiMP) to ribose 5-phosphate and uracil. Functions biologically in the cleavage direction, as part of a pseudouridine degradation pathway. In Rhizobium johnstonii (strain DSM 114642 / LMG 32736 / 3841) (Rhizobium leguminosarum bv. viciae), this protein is Pseudouridine-5'-phosphate glycosidase 2.